Here is a 395-residue protein sequence, read N- to C-terminus: MKRFLLCSFALVLLYPAGIDMYLVGLPRIAADLNASEAQLHIAFSVYLAGMATAMLFAGKIADQSGRKPVAIVGAIVFMMASLLCSRASEGSLFLSGRFLQGIGAGGCYVVAFAILRDTLDEHRRAKVLSLLNGITCIVPVLAPVVGHLIMLRFPWQSLFYTMSAMGIIVGLLSLFILRETRPVRLAPRDLSRSSPAAESLINRFFVSRLAITTLSVSVILTFVNASPVLLMEVMGFSRGDYAITMALTAGVSMVVSFSTPFALGLFKPRTLMLVSQGLFLTAGVTLSLAHTNTVTLFGLTLICAGFSVGFGVAMSQALGPFSLRAGVASSTLGIAQVCGSSLWIWLAAILGISAMNMLIGILIGCSIVSILLIFSVTPNRSVAEHEEIPYQSRP.

The next 12 helical transmembrane spans lie at 4 to 24 (FLLCSFALVLLYPAGIDMYLV), 42 to 62 (IAFSVYLAGMATAMLFAGKIA), 69 to 89 (PVAIVGAIVFMMASLLCSRAS), 93 to 113 (LFLSGRFLQGIGAGGCYVVAF), 131 to 151 (LLNGITCIVPVLAPVVGHLIM), 158 to 178 (SLFYTMSAMGIIVGLLSLFIL), 217 to 237 (VSVILTFVNASPVLLMEVMGF), 247 to 267 (ALTAGVSMVVSFSTPFALGLF), 271 to 291 (TLMLVSQGLFLTAGVTLSLAH), 295 to 315 (VTLFGLTLICAGFSVGFGVAM), 328 to 350 (VASSTLGIAQVCGSSLWIWLAAI), and 355 to 377 (AMNMLIGILIGCSIVSILLIFSV).

This sequence belongs to the major facilitator superfamily. DHA1 family. MdtL (TC 2.A.1.2.22) subfamily.

It is found in the cell inner membrane. The chain is Multidrug resistance protein MdtL from Salmonella dublin (strain CT_02021853).